A 530-amino-acid polypeptide reads, in one-letter code: MDQFGDILEGEVDHSFFDSDFEEGKKCETNSVFDKQNDDPKERIDKDTKNVNSNTGMQTTENYLTEKGNERNVKFPPEHPVENDVTQTVSSFSLPASSRSKKLCDVTTGLKIHVSIPNRIPKIVKEGEGDYYTDGEESSDDGKKYHAKSKPAKPSTNVKKSIRKKYCKVSSSSSSSLSSSSSGSGTDCLDGGSDSHLSDSSPSSKKHVSGITLLSPKQKYKSGIKLTETQPSSTTPKCGHYPEESEDTVTDVSPLSTPDISPLQSFELGIANDQKVKVKKQENVSQEIYEDVEDLKNNSKYLKAAKKGKEKHEPDVSSKLSSVLDCSLDHRHKQKVLHDTMDLNHLLKAFLQLDKKGPQKHHFDQPSVAPGKNYSFTREEVRQIDRENQRLLKELSRQAEKPGSKSTIPRSADHPPKLYHSALSRQKEQQRIERENLALLKRLEAVKPTVGMKRSEQLMDYHRNMGYLNSSPLSRRARSTLGQYSPLRGASRTSSATSGLSCRSERSAVDPSSGHPRRRSKPPNVRTAWL.

Ser19 carries the post-translational modification Phosphoserine. Disordered regions lie at residues 29–83 and 116–258; these read TNSV…PVEN and IPNR…LSTP. The span at 35-49 shows a compositional bias: basic and acidic residues; it reads KQNDDPKERIDKDTK. The span at 50 to 63 shows a compositional bias: polar residues; that stretch reads NVNSNTGMQTTENY. Basic and acidic residues predominate over residues 67-82; that stretch reads KGNERNVKFPPEHPVE. The segment covering 129–139 has biased composition (acidic residues); that stretch reads GDYYTDGEESS. Thr133 carries the post-translational modification Phosphothreonine. Phosphoserine is present on residues Ser138 and Ser139. A compositionally biased stretch (low complexity) spans 170–203; it reads SSSSSSSLSSSSSGSGTDCLDGGSDSHLSDSSPS. The residue at position 215 (Ser215) is a Phosphoserine. Over residues 227–236 the composition is skewed to polar residues; that stretch reads TETQPSSTTP. Phosphoserine is present on residues Ser245 and Ser327. Residues 372–447 adopt a coiled-coil conformation; the sequence is KNYSFTREEV…ALLKRLEAVK (76 aa). Disordered stretches follow at residues 395–417 and 483–530; these read LSRQ…HPPK and QYSP…TAWL. Polar residues predominate over residues 491–501; the sequence is SRTSSATSGLS.

It belongs to the CFAP97 family.

The chain is Cilia- and flagella-associated protein 97 from Pongo abelii (Sumatran orangutan).